Consider the following 141-residue polypeptide: Large ribosomal subunit protein uL16 (141 aa).

This sequence belongs to the universal ribosomal protein uL16 family. In terms of assembly, part of the 50S ribosomal subunit.

In terms of biological role, binds 23S rRNA and is also seen to make contacts with the A and possibly P site tRNAs. The protein is Large ribosomal subunit protein uL16 of Petrotoga mobilis (strain DSM 10674 / SJ95).